A 230-amino-acid chain; its full sequence is Large ribosomal subunit protein uL1 (230 aa).

This sequence belongs to the universal ribosomal protein uL1 family. In terms of assembly, part of the 50S ribosomal subunit.

In terms of biological role, binds directly to 23S rRNA. The L1 stalk is quite mobile in the ribosome, and is involved in E site tRNA release. Protein L1 is also a translational repressor protein, it controls the translation of the L11 operon by binding to its mRNA. In Bradyrhizobium sp. (strain BTAi1 / ATCC BAA-1182), this protein is Large ribosomal subunit protein uL1.